The chain runs to 376 residues: Cytochrome b-c1 complex subunit 2, mitochondrial (376 aa).

A mitochondrion-targeting transit peptide spans 1–16 (MLSRVSARSYSSAAQS).

Belongs to the peptidase M16 family. UQCRC2/QCR2 subfamily. In terms of assembly, component of the ubiquinol-cytochrome c oxidoreductase (cytochrome b-c1 complex, complex III, CIII), a multisubunit enzyme composed of 3 respiratory subunits cytochrome b, cytochrome c1 and Rieske protein, 2 core protein subunits, and additional low-molecular weight protein subunits. The complex exists as an obligatory dimer and forms supercomplexes (SCs) in the inner mitochondrial membrane with cytochrome c oxidase (complex IV, CIV).

It localises to the mitochondrion inner membrane. Component of the ubiquinol-cytochrome c oxidoreductase, a multisubunit transmembrane complex that is part of the mitochondrial electron transport chain which drives oxidative phosphorylation. The respiratory chain contains 3 multisubunit complexes succinate dehydrogenase (complex II, CII), ubiquinol-cytochrome c oxidoreductase (cytochrome b-c1 complex, complex III, CIII) and cytochrome c oxidase (complex IV, CIV), that cooperate to transfer electrons derived from NADH and succinate to molecular oxygen, creating an electrochemical gradient over the inner membrane that drives transmembrane transport and the ATP synthase. The cytochrome b-c1 complex catalyzes electron transfer from ubiquinol to cytochrome c, linking this redox reaction to translocation of protons across the mitochondrial inner membrane, with protons being carried across the membrane as hydrogens on the quinol. In the process called Q cycle, 2 protons are consumed from the matrix, 4 protons are released into the intermembrane space and 2 electrons are passed to cytochrome c. This chain is Cytochrome b-c1 complex subunit 2, mitochondrial (QCR2), found in Debaryomyces hansenii (strain ATCC 36239 / CBS 767 / BCRC 21394 / JCM 1990 / NBRC 0083 / IGC 2968) (Yeast).